A 516-amino-acid polypeptide reads, in one-letter code: Cytochrome P450 1A1 (516 aa).

A mitochondrial targeting signal region spans residues W33 to P44. O-linked (GlcNAc) serine glycosylation occurs at S71. Position 228 (F228) interacts with substrate. Heme is bound at residue C461.

The protein belongs to the cytochrome P450 family. In terms of assembly, interacts with cytosolic chaperones HSP70 and HSP90; this interaction is required for initial targeting to mitochondria. Interacts (via mitochondrial targeting signal) with TOMM40 (via N-terminus); this interaction is required for translocation across the mitochondrial outer membrane. Requires heme as cofactor.

It localises to the endoplasmic reticulum membrane. The protein localises to the mitochondrion inner membrane. The protein resides in the microsome membrane. Its subcellular location is the cytoplasm. The catalysed reaction is an organic molecule + reduced [NADPH--hemoprotein reductase] + O2 = an alcohol + oxidized [NADPH--hemoprotein reductase] + H2O + H(+). It catalyses the reaction estrone + reduced [NADPH--hemoprotein reductase] + O2 = 2-hydroxyestrone + oxidized [NADPH--hemoprotein reductase] + H2O + H(+). It carries out the reaction estrone + reduced [NADPH--hemoprotein reductase] + O2 = 4-hydroxyestrone + oxidized [NADPH--hemoprotein reductase] + H2O + H(+). The enzyme catalyses estrone + reduced [NADPH--hemoprotein reductase] + O2 = 6alpha-hydroxyestrone + oxidized [NADPH--hemoprotein reductase] + H2O + H(+). The catalysed reaction is estrone + reduced [NADPH--hemoprotein reductase] + O2 = 15alpha-hydroxyestrone + oxidized [NADPH--hemoprotein reductase] + H2O + H(+). It catalyses the reaction estrone + reduced [NADPH--hemoprotein reductase] + O2 = 16alpha-hydroxyestrone + oxidized [NADPH--hemoprotein reductase] + H2O + H(+). It carries out the reaction 17beta-estradiol + reduced [NADPH--hemoprotein reductase] + O2 = 2-hydroxy-17beta-estradiol + oxidized [NADPH--hemoprotein reductase] + H2O + H(+). The enzyme catalyses 17beta-estradiol + reduced [NADPH--hemoprotein reductase] + O2 = 4-hydroxy-17beta-estradiol + oxidized [NADPH--hemoprotein reductase] + H2O + H(+). The catalysed reaction is 17beta-estradiol + reduced [NADPH--hemoprotein reductase] + O2 = 6alpha-hydroxy-17beta-estradiol + oxidized [NADPH--hemoprotein reductase] + H2O + H(+). It catalyses the reaction 17beta-estradiol + reduced [NADPH--hemoprotein reductase] + O2 = 7alpha-hydroxy-17beta-estradiol + oxidized [NADPH--hemoprotein reductase] + H2O + H(+). It carries out the reaction 17beta-estradiol + reduced [NADPH--hemoprotein reductase] + O2 = 15alpha-hydroxy-17beta-estradiol + oxidized [NADPH--hemoprotein reductase] + H2O + H(+). The enzyme catalyses (5Z,8Z,11Z)-eicosatrienoate + reduced [NADPH--hemoprotein reductase] + O2 = 19-hydroxy-(5Z,8Z,11Z)-eicosatrienoate + oxidized [NADPH--hemoprotein reductase] + H2O + H(+). The catalysed reaction is (5Z,8Z,11Z,14Z)-eicosatetraenoate + reduced [NADPH--hemoprotein reductase] + O2 = 16-hydroxy-(5Z,8Z,11Z,14Z)-eicosatetraenoate + oxidized [NADPH--hemoprotein reductase] + H2O + H(+). It catalyses the reaction (5Z,8Z,11Z,14Z)-eicosatetraenoate + reduced [NADPH--hemoprotein reductase] + O2 = 17-hydroxy-(5Z,8Z,11Z,14Z)-eicosatetraenoate + oxidized [NADPH--hemoprotein reductase] + H2O + H(+). It carries out the reaction (5Z,8Z,11Z,14Z)-eicosatetraenoate + reduced [NADPH--hemoprotein reductase] + O2 = 18-hydroxy-(5Z,8Z,11Z,14Z)-eicosatetraenoate + oxidized [NADPH--hemoprotein reductase] + H2O + H(+). The enzyme catalyses (5Z,8Z,11Z,14Z)-eicosatetraenoate + reduced [NADPH--hemoprotein reductase] + O2 = 19-hydroxy-(5Z,8Z,11Z,14Z)-eicosatetraenoate + oxidized [NADPH--hemoprotein reductase] + H2O + H(+). The catalysed reaction is (5Z,8Z,11Z,14Z,17Z)-eicosapentaenoate + reduced [NADPH--hemoprotein reductase] + O2 = 19-hydroxy-(5Z,8Z,11Z,14Z,17Z)-eicosapentaenoate + oxidized [NADPH--hemoprotein reductase] + H2O + H(+). It catalyses the reaction (5Z,8Z,11Z,14Z)-eicosatetraenoate + reduced [NADPH--hemoprotein reductase] + O2 = (8R,9S)-epoxy-(5Z,11Z,14Z)-eicosatrienoate + oxidized [NADPH--hemoprotein reductase] + H2O + H(+). It carries out the reaction (5Z,8Z,11Z,14Z)-eicosatetraenoate + reduced [NADPH--hemoprotein reductase] + O2 = (11R,12S)-epoxy-(5Z,8Z,14Z)-eicosatrienoate + oxidized [NADPH--hemoprotein reductase] + H2O + H(+). The enzyme catalyses (5Z,8Z,11Z,14Z)-eicosatetraenoate + reduced [NADPH--hemoprotein reductase] + O2 = (14S,15R)-epoxy-(5Z,8Z,11Z)-eicosatrienoate + oxidized [NADPH--hemoprotein reductase] + H2O + H(+). The catalysed reaction is (5Z,8Z,11Z,14Z)-eicosatetraenoate + reduced [NADPH--hemoprotein reductase] + O2 = (14R,15S)-epoxy-(5Z,8Z,11Z)-eicosatrienoate + oxidized [NADPH--hemoprotein reductase] + H2O + H(+). It catalyses the reaction (5Z,8Z,11Z,14Z,17Z)-eicosapentaenoate + reduced [NADPH--hemoprotein reductase] + O2 = (17R,18S)-epoxy-(5Z,8Z,11Z,14Z)-eicosatetraenoate + oxidized [NADPH--hemoprotein reductase] + H2O + H(+). It carries out the reaction (4Z,7Z,10Z,13Z,16Z,19Z)-docosahexaenoate + reduced [NADPH--hemoprotein reductase] + O2 = (19S,20R)-epoxy-(4Z,7Z,10Z,13Z,16Z)-docosapentaenoate + oxidized [NADPH--hemoprotein reductase] + H2O + H(+). The enzyme catalyses (4Z,7Z,10Z,13Z,16Z,19Z)-docosahexaenoate + reduced [NADPH--hemoprotein reductase] + O2 = (19R,20S)-epoxy-(4Z,7Z,10Z,13Z,16Z)-docosapentaenoate + oxidized [NADPH--hemoprotein reductase] + H2O + H(+). The catalysed reaction is all-trans-retinol + reduced [NADPH--hemoprotein reductase] + O2 = all-trans-retinal + oxidized [NADPH--hemoprotein reductase] + 2 H2O + H(+). It catalyses the reaction all-trans-retinal + reduced [NADPH--hemoprotein reductase] + O2 = all-trans-retinoate + oxidized [NADPH--hemoprotein reductase] + H2O + 2 H(+). It carries out the reaction (13S)-hydroperoxy-(9Z,11E)-octadecadienoate = 13-oxo-(9Z,11E)-octadecadienoate + H2O. The enzyme catalyses (12S)-hydroperoxy-(5Z,8Z,10E,14Z)-eicosatetraenoate = 12-oxo-(5Z,8Z,10E,14Z)-eicosatetraenoate + H2O. The catalysed reaction is (15S)-hydroperoxy-(5Z,8Z,11Z,13E)-eicosatetraenoate = 15-oxo-(5Z,8Z,11Z,13E)-eicosatetraenoate + H2O. It catalyses the reaction (5S)-hydroperoxy-(6E,8Z,11Z,14Z)-eicosatetraenoate = 5-oxo-(6E,8Z,11Z,14Z)-eicosatetraenoate + H2O. The protein operates within steroid hormone biosynthesis. Its pathway is lipid metabolism; fatty acid metabolism. It functions in the pathway cofactor metabolism; retinol metabolism. Functionally, a cytochrome P450 monooxygenase involved in the metabolism of various endogenous substrates, including fatty acids, steroid hormones and vitamins. Mechanistically, uses molecular oxygen inserting one oxygen atom into a substrate, and reducing the second into a water molecule, with two electrons provided by NADPH via cytochrome P450 reductase (CPR; NADPH-ferrihemoprotein reductase). Catalyzes the hydroxylation of carbon-hydrogen bonds. Exhibits high catalytic activity for the formation of hydroxyestrogens from estrone (E1) and 17beta-estradiol (E2), namely 2-hydroxy E1 and E2, as well as D-ring hydroxylated E1 and E2 at the C15alpha and C16alpha positions. Displays different regioselectivities for polyunsaturated fatty acids (PUFA) hydroxylation. Catalyzes the epoxidation of double bonds of certain PUFA. Converts arachidonic acid toward epoxyeicosatrienoic acid (EET) regioisomers, 8,9-, 11,12-, and 14,15-EET, that function as lipid mediators in the vascular system. Displays an absolute stereoselectivity in the epoxidation of eicosapentaenoic acid (EPA) producing the 17(R),18(S) enantiomer. May play an important role in all-trans retinoic acid biosynthesis in extrahepatic tissues. Catalyzes two successive oxidative transformation of all-trans retinol to all-trans retinal and then to the active form all-trans retinoic acid. May also participate in eicosanoids metabolism by converting hydroperoxide species into oxo metabolites (lipoxygenase-like reaction, NADPH-independent). In Balaenoptera acutorostrata (Common minke whale), this protein is Cytochrome P450 1A1 (CYP1A1).